Consider the following 484-residue polypeptide: ATP synthase subunit beta (484 aa).

Residue 168–175 (GGAGVGKT) coordinates ATP.

Belongs to the ATPase alpha/beta chains family. F-type ATPases have 2 components, CF(1) - the catalytic core - and CF(0) - the membrane proton channel. CF(1) has five subunits: alpha(3), beta(3), gamma(1), delta(1), epsilon(1). CF(0) has three main subunits: a(1), b(2) and c(9-12). The alpha and beta chains form an alternating ring which encloses part of the gamma chain. CF(1) is attached to CF(0) by a central stalk formed by the gamma and epsilon chains, while a peripheral stalk is formed by the delta and b chains.

It is found in the cell membrane. The enzyme catalyses ATP + H2O + 4 H(+)(in) = ADP + phosphate + 5 H(+)(out). Its function is as follows. Produces ATP from ADP in the presence of a proton gradient across the membrane. The catalytic sites are hosted primarily by the beta subunits. The protein is ATP synthase subunit beta of Arthrobacter sp. (strain FB24).